Consider the following 422-residue polypeptide: Glycine amidinotransferase, mitochondrial (422 aa).

A mitochondrion-targeting transit peptide spans 1–37 (MLRVRCVRGGSRGAEAVHYIGSMLRKGFVGWVQRSFQ). Active-site residues include Asp-253 and His-302. The Amidino-cysteine intermediate role is filled by Cys-406.

This sequence belongs to the amidinotransferase family. As to quaternary structure, homodimer.

The protein resides in the mitochondrion inner membrane. The enzyme catalyses L-arginine + glycine = guanidinoacetate + L-ornithine. It functions in the pathway amine and polyamine biosynthesis; creatine biosynthesis; creatine from L-arginine and glycine: step 1/2. Functionally, catalyzes the biosynthesis of guanidinoacetate, the immediate precursor of creatine. Creatine plays a vital role in energy metabolism in muscle tissues. May play a role in embryonic and central nervous system development. The protein is Glycine amidinotransferase, mitochondrial of Xenopus tropicalis (Western clawed frog).